Consider the following 430-residue polypeptide: uncharacterized protein (430 aa).

An N-terminal signal peptide occupies residues 1 to 19; it reads MKILLFVVLFFNVLVGIYS. N-linked (GlcNAc...) asparagine glycosylation is present at N39. Positions 119 to 408 are disordered; it reads LDPNSSPSPS…ELLEKNSDGN (290 aa). Residues 124–168 show a composition bias toward pro residues; the sequence is SPSPSPSPSPSPSPSPSPSPSPSPSPSPSPSPSPSPSPSPSPSPS. 2 stretches are compositionally biased toward low complexity: residues 169–253 and 263–285; these read PSSS…TPSQ and PTPT…TQTP. Over residues 286–303 the composition is skewed to polar residues; the sequence is ISSRPMSISTEKPSSSEE. N-linked (GlcNAc...) asparagine glycosylation is present at N312. The segment covering 316–325 has biased composition (basic and acidic residues); that stretch reads SEDKKKDSES. Positions 326–370 are enriched in low complexity; it reads KSSQSESPSPSASASESESASESASASTSVSVSASPLPIMDSSSS. An N-linked (GlcNAc...) asparagine glycan is attached at N408.

The protein resides in the secreted. This is an uncharacterized protein from Dictyostelium discoideum (Social amoeba).